Consider the following 158-residue polypeptide: UPF0758 protein VC_1786 (158 aa).

An MPN domain is found at 37–158; that stretch reads TFARTENTTE…SVSFAERGWL (122 aa). 3 residues coordinate Zn(2+): histidine 108, histidine 110, and aspartate 121. The JAMM motif signature appears at 108–121; sequence HNHPSGDPEPSQAD.

The protein belongs to the UPF0758 family.

The protein is UPF0758 protein VC_1786 of Vibrio cholerae serotype O1 (strain ATCC 39315 / El Tor Inaba N16961).